The sequence spans 597 residues: Exochitinase 1 (597 aa).

The or 32 signal peptide spans 1-29 (MDRFRPLAVLIAAALTLSGTTALSSAARA). The Fibronectin type-III domain occupies 172–253 (PPTGLRTGSV…ATVTATTAPG (82 aa)). The GH18 domain maps to 264-597 (HALVGYLHAS…FQRTFDGYFG (334 aa)). Glu-384 acts as the Proton donor in catalysis.

It belongs to the glycosyl hydrolase 18 family. Chitinase class II subfamily. Post-translationally, the N-terminus is blocked.

It carries out the reaction Random endo-hydrolysis of N-acetyl-beta-D-glucosaminide (1-&gt;4)-beta-linkages in chitin and chitodextrins.. Inhibited by the pseudosugar allosamidin A. Its function is as follows. Exochitinase that generates exclusively chitobiose from chitotetraose, chitohexaose, and colloidal high-molecular mass chitin. The sequence is that of Exochitinase 1 (chi01) from Streptomyces olivaceoviridis (Streptomyces corchorusii).